The chain runs to 365 residues: Dual-specificity RNA methyltransferase RlmN (365 aa).

E91 acts as the Proton acceptor in catalysis. Positions 97-337 constitute a Radical SAM core domain; sequence ETSRGTLCIS…TTVRKTRGDD (241 aa). C104 and C342 are disulfide-bonded. [4Fe-4S] cluster is bound by residues C111, C115, and C118. Residues 168 to 169, S200, 222 to 224, and N299 contribute to the S-adenosyl-L-methionine site; these read GE and SLH. C342 acts as the S-methylcysteine intermediate in catalysis.

Belongs to the radical SAM superfamily. RlmN family. [4Fe-4S] cluster serves as cofactor.

Its subcellular location is the cytoplasm. The enzyme catalyses adenosine(2503) in 23S rRNA + 2 reduced [2Fe-2S]-[ferredoxin] + 2 S-adenosyl-L-methionine = 2-methyladenosine(2503) in 23S rRNA + 5'-deoxyadenosine + L-methionine + 2 oxidized [2Fe-2S]-[ferredoxin] + S-adenosyl-L-homocysteine. It carries out the reaction adenosine(37) in tRNA + 2 reduced [2Fe-2S]-[ferredoxin] + 2 S-adenosyl-L-methionine = 2-methyladenosine(37) in tRNA + 5'-deoxyadenosine + L-methionine + 2 oxidized [2Fe-2S]-[ferredoxin] + S-adenosyl-L-homocysteine. Its function is as follows. Specifically methylates position 2 of adenine 2503 in 23S rRNA and position 2 of adenine 37 in tRNAs. m2A2503 modification seems to play a crucial role in the proofreading step occurring at the peptidyl transferase center and thus would serve to optimize ribosomal fidelity. In Nitrosospira multiformis (strain ATCC 25196 / NCIMB 11849 / C 71), this protein is Dual-specificity RNA methyltransferase RlmN.